The sequence spans 248 residues: PACRG-like protein (248 aa).

M1 is modified (N-acetylmethionine). Residues 1 to 72 are disordered; that stretch reads MQRSECSGGV…NPKTINPFGE (72 aa). Composition is skewed to polar residues over residues 14 to 29 and 36 to 45; these read NRATGSNDQRTSSSTQ and VQRSKSSSLT. Phosphoserine is present on S47.

The protein is PACRG-like protein (Pacrgl) of Mus musculus (Mouse).